We begin with the raw amino-acid sequence, 161 residues long: Nucleotide-binding protein RSc2549 (161 aa).

It belongs to the YajQ family.

Functionally, nucleotide-binding protein. The protein is Nucleotide-binding protein RSc2549 of Ralstonia nicotianae (strain ATCC BAA-1114 / GMI1000) (Ralstonia solanacearum).